The following is a 1723-amino-acid chain: Lys-gingipain (1723 aa).

Positions 1–24 are cleaved as a signal peptide; sequence MRKLLLLIAASLLGVGLYAQSAKI. Positions 25 to 228 are excised as a propeptide; that stretch reads KLDAPTTRTT…ETAYKQLFNR (204 aa). Asp313, Asp337, Asp339, Phe341, and Glu343 together coordinate Ca(2+). His444 acts as the Proton donor in catalysis. Residue Cys477 is the Nucleophile of the active site. Phe482 and Glu491 together coordinate Ca(2+). Positions 964–985 are disordered; the sequence is WDAPNGTPNPNPNPNPGTTTLS. Ca(2+)-binding residues include Ser987, Glu989, Asp1000, Asp1002, Asp1004, His1006, Ser1021, Gly1023, Asn1042, Asp1145, Glu1146, Asp1430, Glu1432, Asp1444, Asp1446, Asp1448, Asn1450, Ser1480, Asn1495, and Asp1585.

The protein belongs to the peptidase C25 family. Proteolytically cleaved into a catalytic subunit and three adhesins. Arg-gingipain is involved in this post-translational processing.

It is found in the secreted. The enzyme catalyses Endopeptidase with strict specificity for lysyl bonds.. With respect to regulation, activated by the thiol-reducing agents cysteine, 2-mercaptoethanol and dithiothreitol. Inhibited by iodacetamide, iodoacetic acid, leupeptin, tosyl-L-lysine and tosyl-L-phenylalanine. Not inhibited by elastatinal, chymostatin, cystatins, alpha1-antichymotrypsin or the serine protease inhibitors phenylmethylsulfonyl fluoride and diisopropylfluorophosphate. Not inhibited by metal ion chelators. Inhibited by the heavy metal ions Fe(3+), Zn(2+), Cu(2+) and Mn(2+). Cysteine proteinase with a strong preference for substrates with Lys in the P1 position. Hydrolyzes bovine hemoglobin, bovine serum albumin, casein, human placental type I collagen and human IgA and IgG. Disrupts the functions of polymorphonuclear leukocytes. May act as a virulence factor in the development of peridontal disease. Involved in the coaggregation of P.gingivalis with other oral bacteria. The sequence is that of Lys-gingipain from Porphyromonas gingivalis (strain ATCC 33277 / DSM 20709 / CIP 103683 / JCM 12257 / NCTC 11834 / 2561).